A 308-amino-acid polypeptide reads, in one-letter code: Glucan 1,3-beta-glucosidase BGL2 (308 aa).

The first 18 residues, 1 to 18 (MQIKFLTTLATVLTSVAA), serve as a signal peptide directing secretion. Glu-119 (proton donor) is an active-site residue. N-linked (GlcNAc...) asparagine glycosylation occurs at Asn-197. Glu-228 (nucleophile) is an active-site residue.

It belongs to the glycosyl hydrolase 17 family.

The protein resides in the secreted. The protein localises to the cell wall. Its subcellular location is the cytoplasm. The catalysed reaction is Successive hydrolysis of beta-D-glucose units from the non-reducing ends of (1-&gt;3)-beta-D-glucans, releasing alpha-glucose.. Functionally, cell wall glucan 1,3-beta-glucosidase involved in cell wall biosynthesis and virulence. Crucial for delivery of beta-1,3-glucan to the biofilm matrix and for accumulation of mature matrix biomass. Plays a role as a major antigen in human systemic candidiasis patients. The protein is Glucan 1,3-beta-glucosidase BGL2 (BGL2) of Candida albicans (strain SC5314 / ATCC MYA-2876) (Yeast).